Consider the following 334-residue polypeptide: Geminin coiled-coil domain-containing protein 1 (334 aa).

Residues 82–119 (SQLYRNKQLQDTLVQKEEELARLHEENNHLRQYLNSAL) adopt a coiled-coil conformation. The tract at residues 143-167 (FRKGKRKSKEQRYSPAEIPHPKNAK) is disordered.

The protein belongs to the GEMC1 family. Post-translationally, highly phosphorylated by CDK2; stimulates initiation of DNA replication.

Its subcellular location is the nucleus. Functionally, regulator of DNA replication. Promotes initiation of chromosomal DNA replication by mediating TOPBP1- and CDK2-dependent recruitment of CDC45L onto replication origins. The chain is Geminin coiled-coil domain-containing protein 1 (GMNC) from Homo sapiens (Human).